The sequence spans 776 residues: Lysyl oxidase homolog 2 (776 aa).

The N-terminal stretch at 1–25 is a signal peptide; the sequence is MEIPFGSCLYSCLALLVLLPSLSLA. SRCR domains are found at residues 61 to 162, 191 to 305, 329 to 428, and 438 to 546; these read VRLA…VVCS, IRPI…VSCV, VRLR…VRCN, and VRLN…VACS. Disulfide bonds link Cys87–Cys151, Cys100–Cys161, Cys131–Cys141, Cys221–Cys294, Cys234–Cys304, Cys268–Cys278, Cys354–Cys417, Cys367–Cys427, and Cys398–Cys408. An N-linked (GlcNAc...) asparagine glycan is attached at Asn267. An N-linked (GlcNAc...) asparagine glycan is attached at Asn291. Asn458 carries N-linked (GlcNAc...) asparagine glycosylation. 3 disulfides stabilise this stretch: Cys467–Cys532, Cys480–Cys545, and Cys514–Cys524. The tract at residues 550–753 is lysyl-oxidase like; the sequence is PDLVLNAEIV…WMYNCHVGGA (204 aa). Ca(2+)-binding residues include Asp551 and Leu552. 4 disulfides stabilise this stretch: Cys575/Cys627, Cys581/Cys697, Cys659/Cys675, and Cys665/Cys687. Cu cation-binding residues include His628, His630, and His632. An N-linked (GlcNAc...) asparagine glycan is attached at Asn646. A cross-link (lysine tyrosylquinone (Lys-Tyr)) is located at residues 655 to 691; that stretch reads KASFCLEDTECEGDIQKSYECANFGEQGITMGCWDMY. Tyr691 is modified (2',4',5'-topaquinone). Ca(2+) is bound by residues Glu724, Asp726, Asn729, and Asn730. Residues Cys734 and Cys748 are joined by a disulfide bond.

This sequence belongs to the lysyl oxidase family. Component of some chromatin repressor complex. Interacts with SNAI1. Interacts with TAF10. Interacts with HSPA5. Interacts with EFEMP2. Requires Cu cation as cofactor. The cofactor is lysine tyrosylquinone residue. In terms of processing, the lysine tyrosylquinone cross-link (LTQ) is generated by condensation of the epsilon-amino group of a lysine with a topaquinone produced by oxidation of tyrosine. N-glycosylated. N-glycosylation on Asn-458 and Asn-646 may be essential for proper folding and secretion; may be composed of a fucosylated carbohydrates attached to a trimannose N-linked glycan core.

The protein resides in the secreted. Its subcellular location is the extracellular space. It is found in the extracellular matrix. The protein localises to the basement membrane. It localises to the nucleus. The protein resides in the chromosome. Its subcellular location is the endoplasmic reticulum. It carries out the reaction L-lysyl-[protein] + O2 + H2O = (S)-2-amino-6-oxohexanoyl-[protein] + H2O2 + NH4(+). Specifically inhibited by a mouse monoclonal antibody AB0023, inhibition occurs in a non-competitive manner. In terms of biological role, mediates the post-translational oxidative deamination of lysine residues on target proteins leading to the formation of deaminated lysine (allysine). Acts as a transcription corepressor and specifically mediates deamination of trimethylated 'Lys-4' of histone H3 (H3K4me3), a specific tag for epigenetic transcriptional activation. Shows no activity against histone H3 when it is trimethylated on 'Lys-9' (H3K9me3) or 'Lys-27' (H3K27me3) or when 'Lys-4' is monomethylated (H3K4me1) or dimethylated (H3K4me2). Also mediates deamination of methylated TAF10, a member of the transcription factor IID (TFIID) complex, which induces release of TAF10 from promoters, leading to inhibition of TFIID-dependent transcription. LOXL2-mediated deamination of TAF10 results in transcriptional repression of genes required for embryonic stem cell pluripotency including POU5F1/OCT4, NANOG, KLF4 and SOX2. Involved in epithelial to mesenchymal transition (EMT) via interaction with SNAI1 and participates in repression of E-cadherin CDH1, probably by mediating deamination of histone H3. During EMT, involved with SNAI1 in negatively regulating pericentromeric heterochromatin transcription. SNAI1 recruits LOXL2 to pericentromeric regions to oxidize histone H3 and repress transcription which leads to release of heterochromatin component CBX5/HP1A, enabling chromatin reorganization and acquisition of mesenchymal traits. Interacts with the endoplasmic reticulum protein HSPA5 which activates the IRE1-XBP1 pathway of the unfolded protein response, leading to expression of several transcription factors involved in EMT and subsequent EMT induction. When secreted into the extracellular matrix, promotes cross-linking of extracellular matrix proteins by mediating oxidative deamination of peptidyl lysine residues in precursors to fibrous collagen and elastin. Acts as a regulator of sprouting angiogenesis, probably via collagen IV scaffolding. Acts as a regulator of chondrocyte differentiation, probably by regulating expression of factors that control chondrocyte differentiation. This chain is Lysyl oxidase homolog 2 (Loxl2), found in Rattus norvegicus (Rat).